The primary structure comprises 475 residues: Ribulose bisphosphate carboxylase large chain (475 aa).

Residues 1-2 (MS) constitute a propeptide that is removed on maturation. The residue at position 3 (P3) is an N-acetylproline. K14 bears the N6,N6,N6-trimethyllysine mark. Substrate-binding residues include N123 and T173. K175 functions as the Proton acceptor in the catalytic mechanism. K177 contacts substrate. Positions 201, 203, and 204 each coordinate Mg(2+). At K201 the chain carries N6-carboxylysine. The Proton acceptor role is filled by H294. 3 residues coordinate substrate: R295, H327, and S379.

Belongs to the RuBisCO large chain family. Type I subfamily. As to quaternary structure, heterohexadecamer of 8 large chains and 8 small chains; disulfide-linked. The disulfide link is formed within the large subunit homodimers. Mg(2+) is required as a cofactor. Post-translationally, the disulfide bond which can form in the large chain dimeric partners within the hexadecamer appears to be associated with oxidative stress and protein turnover.

The protein localises to the plastid. It is found in the chloroplast. The enzyme catalyses 2 (2R)-3-phosphoglycerate + 2 H(+) = D-ribulose 1,5-bisphosphate + CO2 + H2O. It carries out the reaction D-ribulose 1,5-bisphosphate + O2 = 2-phosphoglycolate + (2R)-3-phosphoglycerate + 2 H(+). In terms of biological role, ruBisCO catalyzes two reactions: the carboxylation of D-ribulose 1,5-bisphosphate, the primary event in carbon dioxide fixation, as well as the oxidative fragmentation of the pentose substrate in the photorespiration process. Both reactions occur simultaneously and in competition at the same active site. This is Ribulose bisphosphate carboxylase large chain from Angiopteris lygodiifolia (Turnip fern).